A 539-amino-acid chain; its full sequence is T-complex protein 1 subunit delta (539 aa).

Residues 1–29 (MPENVAPRSGATAGAAGGRGKGAYQDRDK) are disordered. Omega-N-methylarginine is present on Arg19. Position 21 is an N6-acetyllysine (Lys21). Ser36 carries the phosphoserine modification. Gly53 contributes to the ADP binding site. Residue Gly53 participates in ATP binding. Asp104 is a Mg(2+) binding site. The ADP site is built by Gly105, Thr106, Thr107, Ser108, Asn172, Ser173, and Lys174. ATP is bound by residues Gly105 and Thr106. ATP is bound at residue Lys174. Phosphoserine is present on residues Ser184 and Ser202. An N6-acetyllysine mark is found at Lys288, Lys302, Lys319, and Lys326. Position 425 (Gly425) interacts with ADP. The residue at position 444 (Ser444) is a Phosphoserine. Residue Gln510 participates in ADP binding.

Belongs to the TCP-1 chaperonin family. As to quaternary structure, component of the chaperonin-containing T-complex (TRiC), a hexadecamer composed of two identical back-to-back stacked rings enclosing a protein folding chamber. Each ring is made up of eight different subunits: TCP1/CCT1, CCT2, CCT3, CCT4, CCT5, CCT6A/CCT6, CCT7, CCT8. Interacts with PACRG. Interacts with DNAAF4. Interacts with DLEC1.

Its subcellular location is the cytoplasm. It is found in the melanosome. The protein resides in the cytoskeleton. The protein localises to the microtubule organizing center. It localises to the centrosome. Its subcellular location is the cilium basal body. It catalyses the reaction ATP + H2O = ADP + phosphate + H(+). Its function is as follows. Component of the chaperonin-containing T-complex (TRiC), a molecular chaperone complex that assists the folding of actin, tubulin and other proteins upon ATP hydrolysis. The TRiC complex mediates the folding of WRAP53/TCAB1, thereby regulating telomere maintenance. As part of the TRiC complex may play a role in the assembly of BBSome, a complex involved in ciliogenesis regulating transports vesicles to the cilia. This is T-complex protein 1 subunit delta (CCT4) from Homo sapiens (Human).